We begin with the raw amino-acid sequence, 363 residues long: Aspartate-semialdehyde dehydrogenase (363 aa).

Residues Thr15, Gly16, Ser17, Val18, Ser40, Ser43, and Leu87 each coordinate NADP(+). Cys154 serves as the catalytic Acyl-thioester intermediate. Gly186 is an NADP(+) binding site. His251 functions as the Proton acceptor in the catalytic mechanism. Residue Asn341 participates in NADP(+) binding.

The protein belongs to the aspartate-semialdehyde dehydrogenase family. In terms of assembly, homotetramer; dimer of dimers.

The protein localises to the cytoplasm. It is found in the cytosol. Its subcellular location is the nucleus. It catalyses the reaction L-aspartate 4-semialdehyde + phosphate + NADP(+) = 4-phospho-L-aspartate + NADPH + H(+). It participates in amino-acid biosynthesis; L-methionine biosynthesis via de novo pathway; L-homoserine from L-aspartate: step 2/3. The protein operates within amino-acid biosynthesis; L-threonine biosynthesis; L-threonine from L-aspartate: step 2/5. With respect to regulation, inhibited by 4-amino-3-hydroxynaphthalene-1-sulfonic acid and the competitive inhibitor 1,4-benzoquinone and derivates such as 2-chloro-3-methoxy-1,4-naphthoquinone, 2,3-dichloro-1,4-naphthoquinone, 2-chloro-1,4-naphthoquinone, 2-bromo-1,4-naphthoquinone and 2,3-dichloro-5,8-dihydroxy-1,4-naphthoquinone. In terms of biological role, catalyzes the NADPH-dependent formation of L-aspartate 4-semialdehyde (L-ASA) by the reductive dephosphorylation of 4-phospho-L-aspartate. Mediates the second step in the biosynthesis of amino acids that derive from aspartate (the aspartate family of amino acids), including methioinine and threonine, the latter of which is a precursor to isoleucine. In Aspergillus fumigatus (strain ATCC MYA-4609 / CBS 101355 / FGSC A1100 / Af293) (Neosartorya fumigata), this protein is Aspartate-semialdehyde dehydrogenase.